A 360-amino-acid chain; its full sequence is Phenylalanine--tRNA ligase alpha subunit (360 aa).

Residue Glu-260 participates in Mg(2+) binding.

Belongs to the class-II aminoacyl-tRNA synthetase family. Phe-tRNA synthetase alpha subunit type 1 subfamily. As to quaternary structure, tetramer of two alpha and two beta subunits. It depends on Mg(2+) as a cofactor.

Its subcellular location is the cytoplasm. It carries out the reaction tRNA(Phe) + L-phenylalanine + ATP = L-phenylalanyl-tRNA(Phe) + AMP + diphosphate + H(+). The chain is Phenylalanine--tRNA ligase alpha subunit from Rhizobium etli (strain CIAT 652).